Consider the following 321-residue polypeptide: Manganese-dependent ADP-ribose/CDP-alcohol diphosphatase (321 aa).

Asp-25, Gln-27, Asp-72, Asn-107, His-226, His-263, and His-265 together coordinate Zn(2+).

Belongs to the ADPRibase-Mn family. In terms of assembly, monomer. Requires Mg(2+) as cofactor.

The catalysed reaction is CDP-choline + H2O = phosphocholine + CMP + 2 H(+). It carries out the reaction ADP-D-ribose + H2O = D-ribose 5-phosphate + AMP + 2 H(+). It catalyses the reaction CDP-glycerol + H2O = sn-glycerol 3-phosphate + CMP + 2 H(+). Hydrolyzes ADP-ribose, IDP-ribose, CDP-glycerol, CDP-choline and CDP-ethanolamine, but not other non-reducing ADP-sugars or CDP-glucose. This Oryza sativa subsp. japonica (Rice) protein is Manganese-dependent ADP-ribose/CDP-alcohol diphosphatase.